A 298-amino-acid chain; its full sequence is Tyrosine recombinase XerC (298 aa).

Residues 1–84 (MNHIQEAFLN…TLRTFYEYWM (84 aa)) enclose the Core-binding (CB) domain. The Tyr recombinase domain occupies 105–286 (YLPQFFYEEE…SNQQLRKVYL (182 aa)). Residues R145, K169, H238, R241, and H264 contribute to the active site. The active-site O-(3'-phospho-DNA)-tyrosine intermediate is Y273.

This sequence belongs to the 'phage' integrase family. XerC subfamily. In terms of assembly, forms a cyclic heterotetrameric complex composed of two molecules of XerC and two molecules of XerD.

It is found in the cytoplasm. Site-specific tyrosine recombinase, which acts by catalyzing the cutting and rejoining of the recombining DNA molecules. The XerC-XerD complex is essential to convert dimers of the bacterial chromosome into monomers to permit their segregation at cell division. It also contributes to the segregational stability of plasmids. The sequence is that of Tyrosine recombinase XerC from Staphylococcus aureus (strain bovine RF122 / ET3-1).